The chain runs to 54 residues: UPF0181 protein PM0480 (54 aa).

This sequence belongs to the UPF0181 family.

In Pasteurella multocida (strain Pm70), this protein is UPF0181 protein PM0480.